Here is a 188-residue protein sequence, read N- to C-terminus: Adenine phosphoribosyltransferase (188 aa).

The protein belongs to the purine/pyrimidine phosphoribosyltransferase family. In terms of assembly, homodimer.

The protein localises to the cytoplasm. The catalysed reaction is AMP + diphosphate = 5-phospho-alpha-D-ribose 1-diphosphate + adenine. Its pathway is purine metabolism; AMP biosynthesis via salvage pathway; AMP from adenine: step 1/1. In terms of biological role, catalyzes a salvage reaction resulting in the formation of AMP, that is energically less costly than de novo synthesis. This is Adenine phosphoribosyltransferase from Salinispora arenicola (strain CNS-205).